A 367-amino-acid chain; its full sequence is tRNA/tmRNA (uracil-C(5))-methyltransferase (367 aa).

Positions 190, 218, 223, 239, and 299 each coordinate S-adenosyl-L-methionine. Cysteine 324 acts as the Nucleophile in catalysis. Catalysis depends on glutamate 358, which acts as the Proton acceptor.

The protein belongs to the class I-like SAM-binding methyltransferase superfamily. RNA M5U methyltransferase family. TrmA subfamily.

It carries out the reaction uridine(54) in tRNA + S-adenosyl-L-methionine = 5-methyluridine(54) in tRNA + S-adenosyl-L-homocysteine + H(+). The catalysed reaction is uridine(341) in tmRNA + S-adenosyl-L-methionine = 5-methyluridine(341) in tmRNA + S-adenosyl-L-homocysteine + H(+). Dual-specificity methyltransferase that catalyzes the formation of 5-methyluridine at position 54 (m5U54) in all tRNAs, and that of position 341 (m5U341) in tmRNA (transfer-mRNA). This chain is tRNA/tmRNA (uracil-C(5))-methyltransferase, found in Pectobacterium atrosepticum (strain SCRI 1043 / ATCC BAA-672) (Erwinia carotovora subsp. atroseptica).